Here is a 3856-residue protein sequence, read N- to C-terminus: Hybrid PKS-NRPS synthetase traA (3856 aa).

The 433-residue stretch at 6–438 folds into the Ketosynthase family 3 (KS3) domain; it reads PEPIAIVGSG…GTNGHAILEE (433 aa). Active-site for beta-ketoacyl synthase activity residues include Cys-179, His-318, and His-358. Positions 554–885 are malonyl-CoA:ACP transacylase (MAT) domain; sequence IFTGQGAQWA…FSDALGFVWT (332 aa). The N-terminal hotdog fold stretch occupies residues 943-1081; it reads HELLGVPSPN…GKVTVIYGTP (139 aa). Residues 943 to 1247 are dehydratase (DH) domain; it reads HELLGVPSPN…LSMKPFSPAT (305 aa). The PKS/mFAS DH domain maps to 943 to 1249; that stretch reads HELLGVPSPN…MKPFSPATAD (307 aa). The Proton acceptor; for dehydratase activity role is filled by His-975. The segment at 1096-1249 is C-terminal hotdog fold; it reads MVDIQAEQFY…MKPFSPATAD (154 aa). Asp-1156 acts as the Proton donor; for dehydratase activity in catalysis. The tract at residues 1290–1456 is methyltransferase (MT) domain; sequence LACVAQQIVH…RKAGFSGIDS (167 aa). Positions 1984-2158 are ketoreductase (KR) domain; sequence TYVLVGLSGR…ATSLDIGSIV (175 aa). Residues 2266-2347 form the Carrier 1 domain; sequence ADALEILKEL…TLCQQALEKL (82 aa). Ser-2307 carries the post-translational modification O-(pantetheine 4'-phosphoryl)serine. The interval 2351 to 2422 is disordered; the sequence is ILPNVESGGP…SSTPATVLSN (72 aa). Composition is skewed to low complexity over residues 2357–2369 and 2399–2418; these read SGGP…SKPT and TTSP…TPAT. The tract at residues 2446–2884 is condensation (C) domain; sequence VKTELVSFQQ…FALFSDKELK (439 aa). Residues 2910–3310 are adenylation (A) domain; it reads QIAKENDDKV…GAMVFHNRIA (401 aa). A disordered region spans residues 3403–3429; sequence SKTDRKALKELPLPQRSNHDTGDNTES. Residues 3428-3507 form the Carrier 2 domain; it reads ESLTETMLEL…DMTQKIEESL (80 aa). Ser-3467 carries the O-(pantetheine 4'-phosphoryl)serine modification. A reductase (R) domain region spans residues 3544–3768; it reads VTGSGGFLGK…EMTPIHSAAS (225 aa).

In the C-terminal section; belongs to the NRP synthetase family.

The protein operates within secondary metabolite biosynthesis. Hybrid PKS-NRPS synthetase; part of the tra gene cluster that produces terrestric acid. The clavatol biosynthesis cluster cla and the terrestric acid cluster tra are both involved in the production of peniphenones and penilactones. The non-reducing PKS claF is responsible for the formation of clavatol from successive condensations of 3 malonyl-CoA units, presumably with a simple acetyl-CoA starter unit, and 2 methylation steps. The esterase claE probably collaborates with claF by catalyzing the hydrolysis of ACP-bound acyl intermediates to free the ACP from stalled intermediates. The clavatol oxidase claD then converts clavatol to hydroxyclavatol. Spontaneous dehydration of hydroxyclavatol leads to the accumulation of the highly active ortho-quinone methide. On the other hand, the PKS-NRPS hybrid traA is involved in the formation of crustosic acid, with the help of traB and traD. The polyketide synthase module (PKS) of traA is responsible for the synthesis of the polyketide backbone via the condensation of an acetyl-CoA starter unit with 3 malonyl-CoA units. The downstream nonribosomal peptide synthetase (NRPS) module then amidates the carboxyl end of the polyketide with L-malic acid. Because traA lacks a designated enoylreductase (ER) domain, the required activity is provided the enoyl reductase traG. Crustosic acid undergoes decarboxylation and isomerization to the terrestric acid, catalyzed by the 2-oxoglutarate-dependent dioxygenase traH. Both acids are further converted to the 2 gamma-butyrolactones (R)-5-methyltetronic acid and (S)-5-carboxylmethyltetronic acid, with involvement of the cytochrome P450 monooxygenase claJ. Spontaneous addition of the methide to these gamma-butyrolactones leads to peniphenone D and penilactone D, which undergo again stereospecific attacking by methide to give penilactones A and B. The polypeptide is Hybrid PKS-NRPS synthetase traA (Penicillium crustosum (Blue mold fungus)).